Here is a 222-residue protein sequence, read N- to C-terminus: Octanoyltransferase (222 aa).

Positions 34-214 (AEAPSTVLLL…EFRKHEEALV (181 aa)) constitute a BPL/LPL catalytic domain. Residues 72 to 79 (RGGKLTWH), 144 to 146 (AIG), and 157 to 159 (GIA) each bind substrate. The active-site Acyl-thioester intermediate is the C175.

The protein belongs to the LipB family.

It localises to the cytoplasm. It catalyses the reaction octanoyl-[ACP] + L-lysyl-[protein] = N(6)-octanoyl-L-lysyl-[protein] + holo-[ACP] + H(+). Its pathway is protein modification; protein lipoylation via endogenous pathway; protein N(6)-(lipoyl)lysine from octanoyl-[acyl-carrier-protein]: step 1/2. In terms of biological role, catalyzes the transfer of endogenously produced octanoic acid from octanoyl-acyl-carrier-protein onto the lipoyl domains of lipoate-dependent enzymes. Lipoyl-ACP can also act as a substrate although octanoyl-ACP is likely to be the physiological substrate. The polypeptide is Octanoyltransferase (Arthrobacter sp. (strain FB24)).